A 91-amino-acid polypeptide reads, in one-letter code: Acylphosphatase (91 aa).

The region spanning 3–90 (QYRIIVDGRV…EGHHRFSIVY (88 aa)) is the Acylphosphatase-like domain. Catalysis depends on residues Arg18 and Asn36.

The protein belongs to the acylphosphatase family.

It catalyses the reaction an acyl phosphate + H2O = a carboxylate + phosphate + H(+). The protein is Acylphosphatase (acyP) of Bacillus subtilis (strain 168).